The primary structure comprises 345 residues: Dihydroorotase (345 aa).

Zn(2+)-binding residues include H13 and H15. Residues 15–17 and N41 contribute to the substrate site; that span reads HFR. Residues K98, H135, and H173 each contribute to the Zn(2+) site. K98 carries the post-translational modification N6-carboxylysine. H135 contributes to the substrate binding site. Residue L218 participates in substrate binding. D246 contributes to the Zn(2+) binding site. D246 is an active-site residue. The substrate site is built by H250 and A262.

The protein belongs to the metallo-dependent hydrolases superfamily. DHOase family. Class II DHOase subfamily. As to quaternary structure, homodimer. Zn(2+) serves as cofactor.

The catalysed reaction is (S)-dihydroorotate + H2O = N-carbamoyl-L-aspartate + H(+). The protein operates within pyrimidine metabolism; UMP biosynthesis via de novo pathway; (S)-dihydroorotate from bicarbonate: step 3/3. Catalyzes the reversible cyclization of carbamoyl aspartate to dihydroorotate. The chain is Dihydroorotase from Shewanella pealeana (strain ATCC 700345 / ANG-SQ1).